The chain runs to 471 residues: Adenosylhomocysteinase (471 aa).

Residues T60, D135, and E196 each contribute to the substrate site. 197–199 (TTT) contacts NAD(+). Substrate-binding residues include K226 and D230. Residues N231, 260 to 265 (GYGDVG), E283, N318, 339 to 341 (IGH), and N387 contribute to the NAD(+) site.

This sequence belongs to the adenosylhomocysteinase family. It depends on NAD(+) as a cofactor.

Its subcellular location is the cytoplasm. The catalysed reaction is S-adenosyl-L-homocysteine + H2O = L-homocysteine + adenosine. The protein operates within amino-acid biosynthesis; L-homocysteine biosynthesis; L-homocysteine from S-adenosyl-L-homocysteine: step 1/1. Functionally, may play a key role in the regulation of the intracellular concentration of adenosylhomocysteine. The chain is Adenosylhomocysteinase from Pelodictyon phaeoclathratiforme (strain DSM 5477 / BU-1).